Consider the following 70-residue polypeptide: SPbeta prophage-derived uncharacterized protein YorZ (70 aa).

This chain is SPbeta prophage-derived uncharacterized protein YorZ (yorZ), found in Bacillus subtilis (strain 168).